The chain runs to 162 residues: Phosphopantetheine adenylyltransferase (162 aa).

Ser-9 contacts substrate. Residues 9 to 10 (SF) and His-17 each bind ATP. Substrate-binding residues include Lys-41, Leu-73, and Lys-87. ATP is bound by residues 88-90 (GLR), Glu-98, and 123-129 (CSFLSSS).

This sequence belongs to the bacterial CoaD family. As to quaternary structure, homohexamer. Mg(2+) is required as a cofactor.

It localises to the cytoplasm. The catalysed reaction is (R)-4'-phosphopantetheine + ATP + H(+) = 3'-dephospho-CoA + diphosphate. It participates in cofactor biosynthesis; coenzyme A biosynthesis; CoA from (R)-pantothenate: step 4/5. Reversibly transfers an adenylyl group from ATP to 4'-phosphopantetheine, yielding dephospho-CoA (dPCoA) and pyrophosphate. This is Phosphopantetheine adenylyltransferase from Natranaerobius thermophilus (strain ATCC BAA-1301 / DSM 18059 / JW/NM-WN-LF).